The primary structure comprises 213 residues: uncharacterized protein (213 aa).

A helical membrane pass occupies residues 22 to 42 (WFGLSMVSIAVIFGPLTGAHV). The NPA 1 motif lies at 43–45 (NPA). 3 helical membrane passes run 63 to 83 (VYII…WLLF), 112 to 132 (NLLS…TLNH), and 138 to 158 (GVAM…FGGL). Positions 164–166 (NPA) match the NPA 2 motif. The chain crosses the membrane as a helical span at residues 188-208 (FDYAWVPVLRPVIGAILAAWL).

This sequence belongs to the MIP/aquaporin (TC 1.A.8) family.

It is found in the cell membrane. This is an uncharacterized protein from Haemophilus influenzae (strain ATCC 51907 / DSM 11121 / KW20 / Rd).